We begin with the raw amino-acid sequence, 389 residues long: Alpha-2B adrenergic receptor (389 aa).

A helical membrane pass occupies residues 1–25; it reads AIAAVITFLILFTIFGNALVILAVL. At 26–36 the chain is on the cytoplasmic side; sequence TSRSLRAPQNL. A helical transmembrane segment spans residues 37–62; sequence FLVSLAAADILVATLIIPFSLANELL. At 63-72 the chain is on the extracellular side; that stretch reads GYWYFWRTWC. A disulfide bridge links C72 with C151. A helical membrane pass occupies residues 73–95; it reads EVYLALDVLFCTSSIVHLCAISL. Over 96–117 the chain is Cytoplasmic; that stretch reads DRYWAVSRALEYNSKRTPRRIK. Residues 118–140 form a helical membrane-spanning segment; the sequence is CIILTVWLIAAAISLPPLIYKGD. Residues 141–156 are Extracellular-facing; it reads QGPQPRGRPQCMLNQE. A helical transmembrane segment spans residues 157 to 180; that stretch reads AWYILSSSIGSFFAPCLIMILVYL. The Cytoplasmic portion of the chain corresponds to 181 to 353; it reads RIYLIAKRSN…LTREKRFTFV (173 aa). Disordered stretches follow at residues 192–218 and 231–310; these read RGPR…PLAL and DGEA…HLQQ. Residues 234 to 249 show a composition bias toward basic and acidic residues; that stretch reads ANGHSKLTGEKERETS. Residues 354–377 traverse the membrane as a helical segment; that stretch reads LTVVIGVFVLCWFPFFFSYSLGAI. Residues 378–386 are Extracellular-facing; the sequence is CPQHCKVPH. A helical membrane pass occupies residues 387–389; sequence GLF.

This sequence belongs to the G-protein coupled receptor 1 family. Adrenergic receptor subfamily. ADRA2B sub-subfamily. In terms of assembly, interacts with RAB26. Interacts with PPP1R9B.

It localises to the cell membrane. Its function is as follows. Alpha-2 adrenergic receptors mediate the catecholamine-induced inhibition of adenylate cyclase through the action of G proteins. This chain is Alpha-2B adrenergic receptor (ADRA2B), found in Procavia capensis habessinica (Abyssinian hyrax).